The primary structure comprises 98 residues: N(2)-fixation sustaining protein CowN (98 aa).

Belongs to the CowN family.

Is required to sustain N(2)-dependent growth in the presence of low levels of carbon monoxide (CO). Probably acts by protecting the N(2) fixation ability of the nitrogenase complex, which is inactivated in the presence of CO. In Trichlorobacter lovleyi (strain ATCC BAA-1151 / DSM 17278 / SZ) (Geobacter lovleyi), this protein is N(2)-fixation sustaining protein CowN.